We begin with the raw amino-acid sequence, 389 residues long: Large ribosomal subunit protein uL3 (389 aa).

The protein belongs to the universal ribosomal protein uL3 family. Component of the large ribosomal subunit. Mature ribosomes consist of a small (40S) and a large (60S) subunit. The 40S subunit contains about 32 different proteins and 1 molecule of RNA (18S). The 60S subunit contains 45 different proteins and 3 molecules of RNA (25S, 5.8S and 5S).

Its subcellular location is the cytoplasm. In terms of biological role, component of the ribosome, a large ribonucleoprotein complex responsible for the synthesis of proteins in the cell. The small ribosomal subunit (SSU) binds messenger RNAs (mRNAs) and translates the encoded message by selecting cognate aminoacyl-transfer RNA (tRNA) molecules. The large subunit (LSU) contains the ribosomal catalytic site termed the peptidyl transferase center (PTC), which catalyzes the formation of peptide bonds, thereby polymerizing the amino acids delivered by tRNAs into a polypeptide chain. The nascent polypeptides leave the ribosome through a tunnel in the LSU and interact with protein factors that function in enzymatic processing, targeting, and the membrane insertion of nascent chains at the exit of the ribosomal tunnel. RPL3 plays a role in coordinating processes of accommodating the aminoacyl-tRNA in the PTC. The polypeptide is Large ribosomal subunit protein uL3 (Candida albicans (strain SC5314 / ATCC MYA-2876) (Yeast)).